Consider the following 675-residue polypeptide: Transketolase, chloroplastic (675 aa).

Thiamine diphosphate-binding positions include histidine 78 and 127–129 (GPL). Aspartate 168 contacts Mg(2+). 3 residues coordinate thiamine diphosphate: glycine 169, glutamate 173, and asparagine 198. 2 residues coordinate Mg(2+): asparagine 198 and isoleucine 200. Histidine 275 lines the thiamine diphosphate pocket. Substrate-binding residues include histidine 275, arginine 369, and serine 396. Residues glutamate 423 and 450-453 (FTDY) each bind thiamine diphosphate. The active-site Proton donor is the glutamate 423. Positions 474, 482, and 533 each coordinate substrate.

In terms of assembly, homodimer. Mg(2+) is required as a cofactor. Requires Ca(2+) as cofactor. It depends on Mn(2+) as a cofactor. Co(2+) serves as cofactor. The cofactor is thiamine diphosphate.

It localises to the plastid. It is found in the chloroplast thylakoid membrane. The enzyme catalyses D-sedoheptulose 7-phosphate + D-glyceraldehyde 3-phosphate = aldehydo-D-ribose 5-phosphate + D-xylulose 5-phosphate. The protein operates within carbohydrate biosynthesis; Calvin cycle. In terms of biological role, catalyzes the reversible transfer of a two-carbon ketol group from fructose-6-phosphate or sedoheptulose-7-phosphate to glyceraldehyde-3-phosphate to yield xylulose-5-phosphate and erythrose-4-phosphate or ribose-5-phosphate, respectively. In Zea mays (Maize), this protein is Transketolase, chloroplastic.